Here is a 253-residue protein sequence, read N- to C-terminus: MKYRRILLKLSGEALMGERPYGIDPEVLKSIAGEVASVVRAGVQVAIVVGGGNIWRGRKEAAAQGMDQASADYVGMLATVINALTLQDAIERAGIPTRVQTAIAMQEVAEPYIRRRAIRHLEKGRVVIFGAGSGNPFFTTDTTAALRAAEIDAEVIFKATKVDGVYDADPKTHPQARRYDVLSYQDVLNRDLRVMDSTAIALCKENQLPIVVFDLTTPGNIYRVVQGEPIGTWIGQRTVENNGIPSPGELIPS.

9 to 12 contributes to the ATP binding site; it reads KLSG. Glycine 51 lines the UMP pocket. Residues glycine 52 and arginine 56 each contribute to the ATP site. Residues aspartate 72 and 133 to 140 contribute to the UMP site; that span reads SGNPFFTT. ATP is bound by residues threonine 160, tyrosine 166, and aspartate 169.

This sequence belongs to the UMP kinase family. Homohexamer.

It localises to the cytoplasm. The enzyme catalyses UMP + ATP = UDP + ADP. It participates in pyrimidine metabolism; CTP biosynthesis via de novo pathway; UDP from UMP (UMPK route): step 1/1. Inhibited by UTP. In terms of biological role, catalyzes the reversible phosphorylation of UMP to UDP. This chain is Uridylate kinase, found in Synechococcus sp. (strain JA-2-3B'a(2-13)) (Cyanobacteria bacterium Yellowstone B-Prime).